The following is a 559-amino-acid chain: NAD(P)H-quinone oxidoreductase chain 4-2 (559 aa).

14 helical membrane-spanning segments follow: residues 5-25 (FPWL…IPLI), 35-55 (WYAL…FWTN), 86-106 (ISMP…FAAW), 114-134 (LFYF…VAQD), 136-156 (LLLF…VCIW), 168-188 (FLLY…GLAF), 207-227 (IALE…KLAI), 242-262 (SAPV…YGLI), 274-294 (VYFA…GGFS), 310-330 (VSHM…GISG), 331-351 (AMLQ…LAGV), 374-394 (VFAL…MSGF), 417-437 (VTVF…LSML), and 488-508 (VFIA…PKLA).

This sequence belongs to the complex I subunit 4 family.

It is found in the cellular thylakoid membrane. It catalyses the reaction a plastoquinone + NADH + (n+1) H(+)(in) = a plastoquinol + NAD(+) + n H(+)(out). The enzyme catalyses a plastoquinone + NADPH + (n+1) H(+)(in) = a plastoquinol + NADP(+) + n H(+)(out). Functionally, NDH-1 shuttles electrons from NAD(P)H, via FMN and iron-sulfur (Fe-S) centers, to quinones in the respiratory chain. The immediate electron acceptor for the enzyme in this species is believed to be plastoquinone. Couples the redox reaction to proton translocation (for every two electrons transferred, four hydrogen ions are translocated across the cytoplasmic membrane), and thus conserves the redox energy in a proton gradient. This chain is NAD(P)H-quinone oxidoreductase chain 4-2 (ndhD2), found in Synechocystis sp. (strain ATCC 27184 / PCC 6803 / Kazusa).